The primary structure comprises 323 residues: UPF0065 protein BP0148 (323 aa).

The first 24 residues, Met1–Ala24, serve as a signal peptide directing secretion.

It belongs to the UPF0065 (bug) family.

The protein localises to the periplasm. This Bordetella pertussis (strain Tohama I / ATCC BAA-589 / NCTC 13251) protein is UPF0065 protein BP0148.